We begin with the raw amino-acid sequence, 178 residues long: Cytidylate kinase (178 aa).

G7 to T15 contacts ATP.

The protein belongs to the cytidylate kinase family. Type 2 subfamily.

The protein resides in the cytoplasm. The enzyme catalyses CMP + ATP = CDP + ADP. The catalysed reaction is dCMP + ATP = dCDP + ADP. This chain is Cytidylate kinase, found in Methanococcus maripaludis (strain C5 / ATCC BAA-1333).